The primary structure comprises 510 residues: Anaerobic nitric oxide reductase transcription regulator NorR (510 aa).

The 230-residue stretch at 188–417 (IIGNSQGMRT…LEHVIKRAAV (230 aa)) folds into the Sigma-54 factor interaction domain. Residues 216-223 (GETGVGKE) and 279-288 (ADGGTLFLDE) contribute to the ATP site. Positions 486-505 (WAATARQLELDSGNLHRLAK) form a DNA-binding region, H-T-H motif.

It participates in nitrogen metabolism; nitric oxide reduction. Required for the expression of anaerobic nitric oxide (NO) reductase, acts as a transcriptional activator for at least the norVW operon. Activation also requires sigma-54. The sequence is that of Anaerobic nitric oxide reductase transcription regulator NorR from Vibrio vulnificus (strain CMCP6).